A 266-amino-acid chain; its full sequence is Protein-ADP-ribose hydrolase (266 aa).

The 192-residue stretch at 74-265 folds into the Macro domain; sequence TDLKDLKPIK…LYKEALNRDA (192 aa). ADP-D-ribose contacts are provided by Asp93, Ile94, and Asn107. 3 residues coordinate Zn(2+): Cys113, His118, and Cys120. Residues Cys120, Ile121, Asp122, Ser212, Thr213, Gly214, and Phe216 each contribute to the ADP-D-ribose site.

The protein belongs to the MacroD-type family. Zn-Macro subfamily. As to quaternary structure, monomer. Directly interacts with the lipoylated form of GcvH-L. Requires Zn(2+) as cofactor.

The catalysed reaction is 4-O-(ADP-D-ribosyl)-L-aspartyl-[protein] + H2O = L-aspartyl-[protein] + ADP-D-ribose + H(+). Functionally, ADP-ribosylhydrolase that specifically reverses the SirTM-mediated mono-ADP-ribosylation at an asparatate residue of GcvH-L (SAV0324), by releasing ADP-ribose from the target protein. May play a role in the regulation of the response to host-induced oxidative stress. This Staphylococcus aureus (strain Mu50 / ATCC 700699) protein is Protein-ADP-ribose hydrolase.